A 229-amino-acid polypeptide reads, in one-letter code: Cytidylate kinase (229 aa).

12–20 (GPSGAGKGT) provides a ligand contact to ATP.

Belongs to the cytidylate kinase family. Type 1 subfamily.

The protein localises to the cytoplasm. The enzyme catalyses CMP + ATP = CDP + ADP. It carries out the reaction dCMP + ATP = dCDP + ADP. In Serratia proteamaculans (strain 568), this protein is Cytidylate kinase.